The following is a 462-amino-acid chain: Hydroxymethylglutaryl-CoA synthase (462 aa).

Glutamate 92 acts as the Proton donor/acceptor in catalysis. Cysteine 124 acts as the Acyl-thioester intermediate in catalysis. (3S)-3-hydroxy-3-methylglutaryl-CoA contacts are provided by cysteine 124, threonine 167, serine 219, histidine 257, lysine 266, asparagine 327, and serine 360. Histidine 257 serves as the catalytic Proton donor/acceptor. Lysine 408 participates in a covalent cross-link: Glycyl lysine isopeptide (Lys-Gly) (interchain with G-Cter in SUMO).

The protein belongs to the thiolase-like superfamily. HMG-CoA synthase family. In terms of processing, ubiquitinated.

The enzyme catalyses acetoacetyl-CoA + acetyl-CoA + H2O = (3S)-3-hydroxy-3-methylglutaryl-CoA + CoA + H(+). Its pathway is metabolic intermediate biosynthesis; (R)-mevalonate biosynthesis; (R)-mevalonate from acetyl-CoA: step 2/3. Functionally, this enzyme condenses acetyl-CoA with acetoacetyl-CoA to form HMG-CoA, which is the substrate for HMG-CoA reductase. The chain is Hydroxymethylglutaryl-CoA synthase from Caenorhabditis elegans.